The following is a 392-amino-acid chain: Elongation factor Tu-3 (392 aa).

Residues 10–206 (KPHLNIGTMG…AVDTYVPMPE (197 aa)) enclose the tr-type G domain. Positions 19–26 (GHVDHGKT) are G1. 19-26 (GHVDHGKT) contributes to the GTP binding site. Residue threonine 26 participates in Mg(2+) binding. The interval 63–67 (GITIN) is G2. The interval 84–87 (DMPG) is G3. Residues 84–88 (DMPGH) and 139–142 (NKAD) each bind GTP. The segment at 139 to 142 (NKAD) is G4. The interval 176–178 (SGL) is G5.

It belongs to the TRAFAC class translation factor GTPase superfamily. Classic translation factor GTPase family. EF-Tu/EF-1A subfamily. As to quaternary structure, monomer.

It localises to the cytoplasm. It carries out the reaction GTP + H2O = GDP + phosphate + H(+). Functionally, GTP hydrolase that promotes the GTP-dependent binding of aminoacyl-tRNA to the A-site of ribosomes during protein biosynthesis. The sequence is that of Elongation factor Tu-3 from Streptomyces coelicolor (strain ATCC BAA-471 / A3(2) / M145).